The primary structure comprises 603 residues: Ankyrin repeat and LEM domain-containing protein 2 homolog (603 aa).

The chain crosses the membrane as a helical; Signal-anchor for type III membrane protein span at residues G2–S22. 2 ANK repeats span residues F161 to F190 and N221 to T250. Disordered stretches follow at residues I446–D465 and L505–T538. A compositionally biased stretch (acidic residues) spans D456–D465.

This sequence belongs to the ANKLE2 family. In terms of assembly, interacts with baf-1. Interacts with protein phosphatase 2A (PP2A) components.

The protein resides in the nucleus membrane. Functionally, involved in mitotic nuclear envelope reassembly by promoting dephosphorylation of baf-1 during mitotic exit. Coordinates the control of baf-1 dephosphorylation by inhibiting VRK1 kinase and promoting dephosphorylation of baf-1 by protein phosphatase 2A (PP2A), thereby facilitating nuclear envelope assembly. It is unclear whether it acts as a real PP2A regulatory subunit or whether it is involved in recruitment of the PP2A complex. The polypeptide is Ankyrin repeat and LEM domain-containing protein 2 homolog (lem-4) (Caenorhabditis elegans).